A 512-amino-acid chain; its full sequence is Class E vacuolar protein-sorting machinery protein HSE1 (512 aa).

Positions 22–153 (ATDETLTNDN…RLVNDYSQYS (132 aa)) constitute a VHS domain. Disordered stretches follow at residues 153 to 180 (SAET…EDEL) and 200 to 253 (SYLN…ESQT). The segment covering 164–180 (AKKERSRQDKKKEEDEL) has biased composition (basic and acidic residues). One can recognise a UIM domain in the interval 175–194 (KEEDELQRVLKLSLQEYERE). Over residues 215–233 (QYQEQPRQQQQQQQVLQNQ) the composition is skewed to low complexity. Positions 234-253 (PMHSTPTGQQSTQSPAESQT) are enriched in polar residues. The SH3 domain occupies 255–315 (ATVSKVRALY…PLNYVTPVVT (61 aa)). The disordered stretch occupies residues 411-512 (RVTHQPSGMS…INNFPNVNNI (102 aa)). A compositionally biased stretch (polar residues) spans 429-476 (ASPTHSSFSQANPSMLHQQPTSSGFGNARGNSSNEYFHSQQVPPTSFN). The segment covering 502–512 (NINNFPNVNNI) has biased composition (low complexity).

The protein belongs to the STAM family. In terms of assembly, component of the ESCRT-0 complex composed of HSE1 and VPS27.

The protein resides in the endosome membrane. In terms of biological role, component of the ESCRT-0 complex which is the sorting receptor for ubiquitinated cargo proteins at the multivesicular body (MVB). The chain is Class E vacuolar protein-sorting machinery protein HSE1 (HSE1) from Debaryomyces hansenii (strain ATCC 36239 / CBS 767 / BCRC 21394 / JCM 1990 / NBRC 0083 / IGC 2968) (Yeast).